A 315-amino-acid chain; its full sequence is Methionyl-tRNA formyltransferase (315 aa).

113-116 contributes to the (6S)-5,6,7,8-tetrahydrofolate binding site; the sequence is SLLP.

Belongs to the Fmt family.

It carries out the reaction L-methionyl-tRNA(fMet) + (6R)-10-formyltetrahydrofolate = N-formyl-L-methionyl-tRNA(fMet) + (6S)-5,6,7,8-tetrahydrofolate + H(+). Its function is as follows. Attaches a formyl group to the free amino group of methionyl-tRNA(fMet). The formyl group appears to play a dual role in the initiator identity of N-formylmethionyl-tRNA by promoting its recognition by IF2 and preventing the misappropriation of this tRNA by the elongation apparatus. The sequence is that of Methionyl-tRNA formyltransferase from Pseudoalteromonas atlantica (strain T6c / ATCC BAA-1087).